The primary structure comprises 774 residues: MFDTKKVEIQWGGQTLTLETGRVARQADGAVLATLGETVVLCAVTAARSVKEGQDFFPLTVHYQEKYFSSGRIPGGFFKRERGATEKETLVSRLIDRPIRPLFPEGFYNEINVIAQVLSYDGENEPDILAMIAASAALTISGVPFMGPIGAARVGYKDGEYLLNPTDADVAAGDLDLVVAATHDAVMMVESEAKELSEEVMLGAVMFAHKASQDVIKAIIKLAEKSAKDPWEMAPQADLSAAKTKLKKLVGKDITAAYKLTNKSARSSALNEARAKAKEAFADATPQDQMAAIKLVKKLEAEIVRTAILKDGRRIDGRDTRTVRPIVAEAHFLPRAHGSALFTRGETQSISTCTLGTKESEQMIDGLNGLRYEHFMLHYNFPPYSVGEVGRFGAPGRREVGHGKLAWRALHAVLPTKEEFPYTIRLTSDITESNGSSSMATVCGGSLAMMDAGVPIKRPVSGIAMGLILEGKDFAVISDILGDEDHLGDMDFKVAGTSEGITTMQMDIKIAGITEEIFKTALLQAKEGRAHILGEMAKALDHTRTELSAHAPRIETMSVPKDKIRDIIGTGGKIIREIVATTGAKVDIDDDGTVKISSSDTAQIEAARNWIIGIVAEPEVGKIYTGKVVNLVDFGAFVNFMGGKDGLVHVSEIKNERVEKVADALSEGQEVKVKVLEIDNRGKVRLSMRVVDQETGEELPDTRPPREERPRGDRGDRGDRGPRRDGDRRREGGDRGPRRDRGDRGDRPRRERSEGGDEGPAPDFAPAFLTRDDD.

2 residues coordinate Mg(2+): Asp-485 and Asp-491. One can recognise a KH domain in the interval Pro-552 to Ile-611. The S1 motif domain occupies Gly-621–Arg-689. The segment at Arg-689–Asp-774 is disordered. A compositionally biased stretch (basic and acidic residues) spans Pro-700–Gly-755.

The protein belongs to the polyribonucleotide nucleotidyltransferase family. Mg(2+) is required as a cofactor.

It is found in the cytoplasm. The catalysed reaction is RNA(n+1) + phosphate = RNA(n) + a ribonucleoside 5'-diphosphate. Functionally, involved in mRNA degradation. Catalyzes the phosphorolysis of single-stranded polyribonucleotides processively in the 3'- to 5'-direction. This is Polyribonucleotide nucleotidyltransferase from Rhizorhabdus wittichii (strain DSM 6014 / CCUG 31198 / JCM 15750 / NBRC 105917 / EY 4224 / RW1) (Sphingomonas wittichii).